We begin with the raw amino-acid sequence, 164 residues long: Diphosphoinositol polyphosphate phosphohydrolase 3-alpha (164 aa).

Substrate-binding positions include R9, 17–19 (KKR), and 38–40 (SSR). The 128-residue stretch at 17–144 (KKRAACLCFR…VHAEYLEKLK (128 aa)) folds into the Nudix hydrolase domain. Mg(2+) is bound by residues G49 and E65. Positions 50–71 (GGMEPEEEPGGAAVREVYEEAG) match the Nudix box motif. E68 serves as the catalytic Proton acceptor. E69 is a binding site for Mg(2+). Residues 89–91 (PKH), R115, and K133 contribute to the substrate site. Positions 144–164 (KLGGSPTNGNSMAPSSPDSDP) are disordered. Over residues 148 to 164 (SPTNGNSMAPSSPDSDP) the composition is skewed to polar residues.

Belongs to the Nudix hydrolase family. DIPP subfamily. Mg(2+) serves as cofactor. The cofactor is Mn(2+). Mainly expressed in testis and, at lower level in brain. According to PubMed:12121577, it is widely expressed.

The protein resides in the cytoplasm. The enzyme catalyses diphospho-myo-inositol polyphosphate + H2O = myo-inositol polyphosphate + phosphate.. It catalyses the reaction P(1),P(6)-bis(5'-adenosyl) hexaphosphate + H2O = adenosine 5'-pentaphosphate + AMP + 2 H(+). It carries out the reaction P(1),P(5)-bis(5'-adenosyl) pentaphosphate + H2O = adenosine 5'-tetraphosphate + AMP + 2 H(+). Functionally, cleaves a beta-phosphate from the diphosphate groups in PP-InsP5 (diphosphoinositol pentakisphosphate), suggesting that it may play a role in signal transduction. Also able to catalyze the hydrolysis of dinucleoside oligophosphates, with Ap6A and Ap5A being the preferred substrates. The major reaction products are ADP and p4a from Ap6A and ADP and ATP from Ap5A. Also able to hydrolyze 5-phosphoribose 1-diphosphate. The sequence is that of Diphosphoinositol polyphosphate phosphohydrolase 3-alpha (NUDT10) from Homo sapiens (Human).